Here is a 335-residue protein sequence, read N- to C-terminus: Methionine import ATP-binding protein MetN 1 (335 aa).

The region spanning 2–242 (IEFHNVHKTY…PQHPTTRRFV (241 aa)) is the ABC transporter domain. 38 to 45 (GHSGAGKS) contributes to the ATP binding site.

This sequence belongs to the ABC transporter superfamily. Methionine importer (TC 3.A.1.24) family. As to quaternary structure, the complex is composed of two ATP-binding proteins (MetN), two transmembrane proteins (MetI) and a solute-binding protein (MetQ).

It is found in the cell inner membrane. It carries out the reaction L-methionine(out) + ATP + H2O = L-methionine(in) + ADP + phosphate + H(+). The catalysed reaction is D-methionine(out) + ATP + H2O = D-methionine(in) + ADP + phosphate + H(+). In terms of biological role, part of the ABC transporter complex MetNIQ involved in methionine import. Responsible for energy coupling to the transport system. This Pseudomonas savastanoi pv. phaseolicola (strain 1448A / Race 6) (Pseudomonas syringae pv. phaseolicola (strain 1448A / Race 6)) protein is Methionine import ATP-binding protein MetN 1.